A 616-amino-acid chain; its full sequence is Proline--tRNA ligase (616 aa).

The protein belongs to the class-II aminoacyl-tRNA synthetase family. ProS type 1 subfamily. In terms of assembly, homodimer.

Its subcellular location is the cytoplasm. It carries out the reaction tRNA(Pro) + L-proline + ATP = L-prolyl-tRNA(Pro) + AMP + diphosphate. Its function is as follows. Catalyzes the attachment of proline to tRNA(Pro) in a two-step reaction: proline is first activated by ATP to form Pro-AMP and then transferred to the acceptor end of tRNA(Pro). As ProRS can inadvertently accommodate and process non-cognate amino acids such as alanine and cysteine, to avoid such errors it has two additional distinct editing activities against alanine. One activity is designated as 'pretransfer' editing and involves the tRNA(Pro)-independent hydrolysis of activated Ala-AMP. The other activity is designated 'posttransfer' editing and involves deacylation of mischarged Ala-tRNA(Pro). The misacylated Cys-tRNA(Pro) is not edited by ProRS. This Streptococcus sanguinis (strain SK36) protein is Proline--tRNA ligase.